The sequence spans 247 residues: Potassium channel Ftrac_2467 (247 aa).

A run of 6 helical transmembrane segments spans residues 23–44 (TRIE…VLSS), 56–78 (SMRD…YQHY), 89–117 (KVTI…RFLS), 142–165 (LKLL…LMYW), 187–210 (SIIA…IDPW), and 215–237 (TTIL…GRIT). A RxxxFSD motif motif is present at residues 24 to 30 (RIETFSD).

Belongs to the TMEM175 family. Homotetramer.

It is found in the cell membrane. The enzyme catalyses K(+)(in) = K(+)(out). Potassium channel; forms a potassium-permeable leak-like channel with weak selectivity for potassium. The channel is permeable for K(+), Rb(+) and Cs(+). In Marivirga tractuosa (strain ATCC 23168 / DSM 4126 / NBRC 15989 / NCIMB 1408 / VKM B-1430 / H-43) (Microscilla tractuosa), this protein is Potassium channel Ftrac_2467.